Consider the following 506-residue polypeptide: Cytochrome P450 94B3 (506 aa).

A helical membrane pass occupies residues 2–22; sequence AFLLSFLILAFLITIIFFLSS. Cys-447 is a heme binding site.

The protein belongs to the cytochrome P450 family. It depends on heme as a cofactor.

The protein localises to the membrane. It localises to the endoplasmic reticulum membrane. The catalysed reaction is a jasmonyl-L-amino acid + reduced [NADPH--hemoprotein reductase] + O2 = a 12-hydroxyjasmonyl-L-alpha-amino acid + oxidized [NADPH--hemoprotein reductase] + H2O + H(+). It carries out the reaction L-isoleucine-(+)-7-isojasmonate + NADPH + O2 + H(+) = L-isoleucine-(+)-12-hydroxy-7-isojasmonate + NADP(+) + H2O. It catalyses the reaction a jasmonyl-L-isoleucinate + NADPH + O2 + H(+) = L-isoleucine-12-hydroxyjasmonate + NADP(+) + H2O. Functionally, hydroxylase involved in the oxidation of the plant hormone jasmonoyl-L-isoleucine (JA-Ile), a bioactive phytohormone of the jasmonate-mediated signaling pathway. Converts JA-Ile to 12-hydroxy-JA-Ile. Exerts negative feedback control on JA-Ile levels and plays a key role in attenuation of jasmonate responses. Negatively regulates the expression of wound-induced genes TIFY11A/JAZ5, TIFY5A/JAZ8 and TIFY5A/JAZ10. Catalyzes the hydroxylation of jasmonoyl-L-valine (JA-Val), jasmonoyl-L-leucine (JA-Leu) and jasmonoyl-L-phenylalanine (JA-Phe) in vitro. Converts JA-Val, JA-Leu and JA-Phe to 12-hydroxy-JA-Val, 12-hydroxy-JA-Leu and 12-hydroxy-JA-Phe, respectively. This is Cytochrome P450 94B3 from Arabidopsis thaliana (Mouse-ear cress).